We begin with the raw amino-acid sequence, 396 residues long: 1-deoxy-D-xylulose 5-phosphate reductoisomerase (396 aa).

NADPH-binding residues include T10, G11, S12, I13, N38, and N123. K124 contributes to the 1-deoxy-D-xylulose 5-phosphate binding site. E125 is a binding site for NADPH. D149 is a binding site for Mn(2+). 4 residues coordinate 1-deoxy-D-xylulose 5-phosphate: S150, E151, S185, and H208. E151 is a Mn(2+) binding site. G214 provides a ligand contact to NADPH. Positions 221, 226, 227, and 230 each coordinate 1-deoxy-D-xylulose 5-phosphate. Position 230 (E230) interacts with Mn(2+).

Belongs to the DXR family. It depends on Mg(2+) as a cofactor. Requires Mn(2+) as cofactor.

The catalysed reaction is 2-C-methyl-D-erythritol 4-phosphate + NADP(+) = 1-deoxy-D-xylulose 5-phosphate + NADPH + H(+). It functions in the pathway isoprenoid biosynthesis; isopentenyl diphosphate biosynthesis via DXP pathway; isopentenyl diphosphate from 1-deoxy-D-xylulose 5-phosphate: step 1/6. Functionally, catalyzes the NADPH-dependent rearrangement and reduction of 1-deoxy-D-xylulose-5-phosphate (DXP) to 2-C-methyl-D-erythritol 4-phosphate (MEP). This chain is 1-deoxy-D-xylulose 5-phosphate reductoisomerase, found in Shewanella halifaxensis (strain HAW-EB4).